The chain runs to 172 residues: Transcription factor MafF (172 aa).

Positions 51–76 (RLKQRRRTLKNRGYAASCRVKRVCQK) are basic motif. A bZIP domain is found at 51 to 114 (RLKQRRRTLK…DALRGKCEAL (64 aa)). The leucine-zipper stretch occupies residues 79-93 (LQKQKSELEREVDKL). The interval 140–172 (VKSAPSPGPGPAPGPGPASGPGPAPGPAPAACS) is disordered. Residues 145-172 (SPGPGPAPGPGPASGPGPAPGPAPAACS) are compositionally biased toward pro residues.

Belongs to the bZIP family. Maf subfamily. Monomer and homo- or heterodimer. Interacts with MIP. Forms high affinity heterodimers with members of the CNC-bZIP family such as NFE2L1/NRF1.

It localises to the nucleus. Functionally, since they lack a putative transactivation domain, the small Mafs behave as transcriptional repressors when they dimerize among themselves. However, they seem to serve as transcriptional activators by dimerizing with other (usually larger) basic-zipper proteins, such as NFE2L1/NRF1, and recruiting them to specific DNA-binding sites. Interacts with the upstream promoter region of the oxytocin receptor gene. May be a transcriptional enhancer in the up-regulation of the oxytocin receptor gene at parturition. The sequence is that of Transcription factor MafF (MAFF) from Bos taurus (Bovine).